Consider the following 330-residue polypeptide: Aspartate--ammonia ligase (330 aa).

This sequence belongs to the class-II aminoacyl-tRNA synthetase family. AsnA subfamily.

It is found in the cytoplasm. It catalyses the reaction L-aspartate + NH4(+) + ATP = L-asparagine + AMP + diphosphate + H(+). The protein operates within amino-acid biosynthesis; L-asparagine biosynthesis; L-asparagine from L-aspartate (ammonia route): step 1/1. The sequence is that of Aspartate--ammonia ligase from Streptococcus pneumoniae serotype 19F (strain G54).